The primary structure comprises 1071 residues: MKLIYTEMSYSMTEILVNEARKAADQGYRVFYIAPNSLSFEKEREVLTLLPERGTFSIIVTRFVQMSRYFTVESSPSKQHLDDTTLAMIFYRALMQLKPEDLPSYGRLQNNSVFIEQLVELYKELKNAQLSVHDLTGLDHPQKQEDLIKIIELAETIMIQQDYNQDSPLQSFARAIKLGLLNNQLSKTVVVIDGFSRFSAEEDYLLSLLNNNCQEVITGSYVSQKAYQKSFIKGNIYEASLHFLQDLAQKYHIKPVFATSNQVFKPAFSRLTQLFEATHDFSQVDWQLQKNDLDHFSLWQCHHQKEEIEHVAKSIRQKLYEGYRYKDILVLLGDMDAYQLQIGPIFDKFEIPYYLGKAEPMAAHPLVQFIESLERSQRYNWRREDILNMLKSGLFGCFDDSDIDRFEEYTQFADIKGFTKFSKPFTINSSRQYPLDFLNEMRQDIVLPLQELFKSQKQLGASLVDKLILFLKKIRLAENMQGLAQSQLEVEKNEEVWKRFTDILTSFHHIFGQEKLRLSDCLALIKTGMKSAQYRVVPATLDVVTIKSYDLVQPHSKPFVYAIGLTQSHFPKQIHHSGLLSDQERARINEIRNYRHFDIASAENSKKNHQTALSLFNAATKELVLSVPTVINETFDDLSPYLKELINFGLPLLDKGKNYLSYDNSDIGNYKALLSQIIAINRQDLIEMSDQDKMFWTVVLRYLRKQLRKQQLELPTSDYRLSTKSLSKEVIEVCFPKGIPLKLSATALTVFYNNQYNYFLKYVLNLNKTESIHPDSRIHGQYLHRVFERLMKDHTQEPFDNKLKQAIYHTNQESFFQQVYQDNAEAEYSLAILEDIVRSTAPILQLNQNIKVIDQEKNFHLDMGNEILVHGIIDRIDQLSDGSLGVVDYKSSANQFDIGTFYNGLSPQLVTYLAALKQIAPHDINQLFGAMYLHLQDPKLDLVTFKQIDNTLVESIYKALTYKGIFSEVEKEHLSTGAYQTKNALYSNDELETLLNYNKYLYLKAVKHIKKGHFLINPYTSDGKTVQGDQLKAITRFEADLDMAQARRLVTLPAKEKKECFLTLMRKESHL.

Belongs to the helicase family. AddB/RexB type 2 subfamily. Heterodimer of AddA and RexB. It depends on Mg(2+) as a cofactor.

Its function is as follows. The heterodimer acts as both an ATP-dependent DNA helicase and an ATP-dependent, dual-direction single-stranded exonuclease. Recognizes the chi site generating a DNA molecule suitable for the initiation of homologous recombination. This subunit has 5' -&gt; 3' nuclease activity but not helicase activity. The sequence is that of ATP-dependent helicase/deoxyribonuclease subunit B from Streptococcus pyogenes serotype M6 (strain ATCC BAA-946 / MGAS10394).